We begin with the raw amino-acid sequence, 525 residues long: Probable pectinesterase/pectinesterase inhibitor 44 (525 aa).

An N-terminal signal peptide occupies residues 1 to 19 (MSCLKYFLILLMLGLCVSS). Positions 30–153 (VPASEFVSSI…YSMLRELLPL (124 aa)) are pectinesterase inhibitor 44. The N-linked (GlcNAc...) asparagine glycan is linked to Asn98. The disordered stretch occupies residues 157–192 (EQKPKAVSKPGPIAKGPKAPPGRKLRDTDEDESLQF). Residues 212 to 509 (DVSVALDGTG…FTVSQFIKGN (298 aa)) form a pectinesterase 44 region. N-linked (GlcNAc...) asparagine glycosylation is found at Asn222 and Asn278. Thr287 and Gln317 together coordinate substrate. Catalysis depends on Asp340, which acts as the Proton donor; for pectinesterase activity. An intrachain disulfide couples Cys354 to Cys374. Asp361 acts as the Nucleophile; for pectinesterase activity in catalysis. N-linked (GlcNAc...) asparagine glycosylation is found at Asn409 and Asn421. Residues Arg429 and Trp431 each contribute to the substrate site. Residues Asn443, Asn492, and Asn499 are each glycosylated (N-linked (GlcNAc...) asparagine).

This sequence in the N-terminal section; belongs to the PMEI family. The protein in the C-terminal section; belongs to the pectinesterase family. In terms of tissue distribution, expressed in siliques.

The protein localises to the secreted. Its subcellular location is the cell wall. It catalyses the reaction [(1-&gt;4)-alpha-D-galacturonosyl methyl ester](n) + n H2O = [(1-&gt;4)-alpha-D-galacturonosyl](n) + n methanol + n H(+). Its pathway is glycan metabolism; pectin degradation; 2-dehydro-3-deoxy-D-gluconate from pectin: step 1/5. Functionally, acts in the modification of cell walls via demethylesterification of cell wall pectin. The sequence is that of Probable pectinesterase/pectinesterase inhibitor 44 (PME44) from Arabidopsis thaliana (Mouse-ear cress).